Consider the following 474-residue polypeptide: H/ACA ribonucleoprotein complex subunit cbf5 (474 aa).

Asp-100 (nucleophile) is an active-site residue. Residues 271–346 (YKRIVVKDSA…VVAKVKRCIM (76 aa)) form the PUA domain. 2 disordered regions span residues 361 to 391 (SMKK…SKSY) and 406 to 474 (PVVA…KKSE). The span at 368-378 (KKEGKLDKYGR) shows a compositional bias: basic and acidic residues. Low complexity predominate over residues 406–419 (PVVAPAAPTVEAEV). Residues 423–434 (EDSKKRKSVESS) show a composition bias toward basic and acidic residues. Residues 434–468 (SEKDEDEAAKKEEKRRKKEAKKEKKEKKEKKEKKE) are 7 X 3 AA approximate tandem repeats of K-K-E. Repeat copies occupy residues 443–445 (KKE), 450–452 (KKE), 454–456 (KKE), 457–459 (KKE), 460–462 (KKE), 463–465 (KKE), and 466–468 (KKE). The span at 446 to 474 (EKRRKKEAKKEKKEKKEKKEKKEKKKKSE) shows a compositional bias: basic residues.

This sequence belongs to the pseudouridine synthase TruB family. As to quaternary structure, component of the small nucleolar ribonucleoprotein particles containing H/ACA-type snoRNAs (H/ACA snoRNPs).

Its subcellular location is the nucleus. The protein resides in the nucleolus. The catalysed reaction is uridine in 5S rRNA = pseudouridine in 5S rRNA. It carries out the reaction uridine in snRNA = pseudouridine in snRNA. The enzyme catalyses a uridine in mRNA = a pseudouridine in mRNA. Its function is as follows. Catalytic subunit of H/ACA small nucleolar ribonucleoprotein (H/ACA snoRNP) complex, which catalyzes pseudouridylation of rRNA. This involves the isomerization of uridine such that the ribose is subsequently attached to C5, instead of the normal N1. Pseudouridine ('psi') residues may serve to stabilize the conformation of rRNAs and play a central role in ribosomal RNA processing. The H/ACA snoRNP complex also mediates pseudouridylation of other types of RNAs. Catalyzes pseudouridylation at position 93 in U2 snRNA. Also catalyzes pseudouridylation of mRNAs; H/ACA-type snoRNAs probably guide pseudouridylation of mRNAs. This chain is H/ACA ribonucleoprotein complex subunit cbf5 (cbf5), found in Schizosaccharomyces pombe (strain 972 / ATCC 24843) (Fission yeast).